Consider the following 303-residue polypeptide: DnaJ homolog subfamily C member 17 (303 aa).

A J domain is found at 11–76 (DLYALLGIEE…AARAAYDKVR (66 aa)). Disordered regions lie at residues 104–123 (ERQA…SATT) and 150–170 (IRQD…GKGT). Phosphoserine is present on serine 112. Residues 150–166 (IRQDREQRLRGRTENTE) are compositionally biased toward basic and acidic residues. The RRM domain occupies 178–249 (KCKKEDESQG…NPLKVSWLEG (72 aa)). Lysine 264 carries the post-translational modification N6-methyllysine.

Expressed in the thyroid gland.

It localises to the cytoplasm. It is found in the nucleus. Its function is as follows. May negatively affect PAX8-induced thyroglobulin/TG transcription. The polypeptide is DnaJ homolog subfamily C member 17 (Dnajc17) (Mus musculus (Mouse)).